Here is a 108-residue protein sequence, read N- to C-terminus: MSIPAGKNEMPAIHPGEILREEYLKPMGLSAHALAKALHVSPSRINEIVREQRGITADTALRLVRYFGGDAQSWLNMQTAYDLKMAEQDKQSINIIIPLSTDARNVEL.

In terms of domain architecture, HTH cro/C1-type spans 19–74 (LREEYLKPMGLSAHALAKALHVSPSRINEIVREQRGITADTALRLVRYFGGDAQSW). A DNA-binding region (H-T-H motif) is located at residues 30-49 (SAHALAKALHVSPSRINEIV).

Belongs to the VapA/VapI family.

In Dichelobacter nodosus (Bacteroides nodosus), this protein is Virulence-associated protein I (vapI).